The chain runs to 91 residues: Small ribosomal subunit protein uS19 (91 aa).

Belongs to the universal ribosomal protein uS19 family.

In terms of biological role, protein S19 forms a complex with S13 that binds strongly to the 16S ribosomal RNA. This Dechloromonas aromatica (strain RCB) protein is Small ribosomal subunit protein uS19.